Reading from the N-terminus, the 601-residue chain is Adenine deaminase (601 aa).

It belongs to the metallo-dependent hydrolases superfamily. Adenine deaminase family. Requires Mn(2+) as cofactor.

The catalysed reaction is adenine + H2O + H(+) = hypoxanthine + NH4(+). The chain is Adenine deaminase from Ruegeria sp. (strain TM1040) (Silicibacter sp.).